The primary structure comprises 492 residues: Catalase (492 aa).

Catalysis depends on residues histidine 65 and asparagine 138. Tyrosine 348 lines the heme pocket.

Belongs to the catalase family. In terms of assembly, homotetramer. Requires heme as cofactor.

It localises to the cytoplasm. The protein resides in the cytosol. It is found in the peroxisome matrix. The enzyme catalyses 2 H2O2 = O2 + 2 H2O. In terms of biological role, catalyzes the degradation of hydrogen peroxide (H(2)O(2)) generated by peroxisomal oxidases to water and oxygen, thereby protecting cells from the toxic effects of hydrogen peroxide. This is Catalase from Vigna radiata var. radiata (Mung bean).